A 123-amino-acid chain; its full sequence is WAP four-disulfide core domain protein 5 (123 aa).

The N-terminal stretch at 1 to 24 (MRIQSLLLLGALLAVGSQLPAVFG) is a signal peptide. WAP domains lie at 27–73 (KGEK…CVPR) and 74–121 (VSVK…RDPA). Disulfide bonds link Cys34-Cys62, Cys41-Cys66, Cys49-Cys61, Cys55-Cys70, Cys81-Cys109, Cys88-Cys113, Cys96-Cys108, and Cys102-Cys117.

The protein localises to the secreted. Its function is as follows. Putative acid-stable proteinase inhibitor. The polypeptide is WAP four-disulfide core domain protein 5 (WFDC5) (Papio anubis (Olive baboon)).